The sequence spans 624 residues: Na(+)/H(+) antiporter NhaA (624 aa).

The interval 1–164 (MNPELPPNHL…TFFINGRRYD (164 aa)) is unknown. Positions 165 to 624 (GPWDVRSLSE…NAQAEEEKNP (460 aa)) are na(+)/H(+) antiporter NhaA. 11 helical membrane passes run 199 to 219 (GIMLLLATALAVVLSNSALGP), 240 to 260 (LSLRHWINDGLLVIFFLVVGL), 279 to 299 (LPIAAAIGGMAVPALLYLILV), 319 to 339 (GWGVPMATDTAFAIALIAMMG), 348 to 368 (VFLTAAAIVDDIGAIIVVAIF), 371 to 391 (GELHIAYLGSAVAIAGLLALL), 407 to 427 (IVLWVFVYASGIHATLAGIIL), 497 to 517 (FLVLPVFALANAGVVVETSVF), 521 to 541 (IPLMLGTATALVIGKPLGFIT), 565 to 585 (GAGALAGIGFTMSLFIASQAF), and 596 to 616 (IAIFGGSILSAIIGVAILWNA).

This sequence belongs to the NhaA Na(+)/H(+) (TC 2.A.33) antiporter family.

It localises to the cell inner membrane. The catalysed reaction is Na(+)(in) + 2 H(+)(out) = Na(+)(out) + 2 H(+)(in). Na(+)/H(+) antiporter that extrudes sodium in exchange for external protons. The chain is Na(+)/H(+) antiporter NhaA from Nitrosospira multiformis (strain ATCC 25196 / NCIMB 11849 / C 71).